A 426-amino-acid chain; its full sequence is 26S proteasome regulatory subunit 7B (426 aa).

209–216 (GPPGTGKT) contacts ATP.

The protein belongs to the AAA ATPase family.

The protein localises to the cytoplasm. The protein resides in the nucleus. In terms of biological role, the 26S proteasome is involved in the ATP-dependent degradation of ubiquitinated proteins. The regulatory (or ATPase) complex confers ATP dependency and substrate specificity to the 26S complex. The polypeptide is 26S proteasome regulatory subunit 7B (RPT1B) (Oryza sativa subsp. japonica (Rice)).